A 472-amino-acid chain; its full sequence is 3-isopropylmalate dehydratase large subunit (472 aa).

Residues cysteine 349, cysteine 409, and cysteine 412 each coordinate [4Fe-4S] cluster.

It belongs to the aconitase/IPM isomerase family. LeuC type 1 subfamily. Heterodimer of LeuC and LeuD. It depends on [4Fe-4S] cluster as a cofactor.

It carries out the reaction (2R,3S)-3-isopropylmalate = (2S)-2-isopropylmalate. Its pathway is amino-acid biosynthesis; L-leucine biosynthesis; L-leucine from 3-methyl-2-oxobutanoate: step 2/4. Its function is as follows. Catalyzes the isomerization between 2-isopropylmalate and 3-isopropylmalate, via the formation of 2-isopropylmaleate. The protein is 3-isopropylmalate dehydratase large subunit of Rhodospirillum rubrum (strain ATCC 11170 / ATH 1.1.1 / DSM 467 / LMG 4362 / NCIMB 8255 / S1).